Consider the following 523-residue polypeptide: 3-hydroxybenzoate--CoA/4-hydroxybenzoate--CoA ligase (523 aa).

This sequence belongs to the ATP-dependent AMP-binding enzyme family. Benzoate-CoA ligase subfamily.

It carries out the reaction 4-hydroxybenzoate + ATP + CoA = 4-hydroxybenzoyl-CoA + AMP + diphosphate. It catalyses the reaction 3-hydroxybenzoate + ATP + CoA = 3-hydroxybenzoyl-CoA + AMP + diphosphate. Catalyzes the ligation of 3-hydroxybenzoate or 4-hydroxybenzoate and CoA at the expense of ATP. The enzyme shows low activity towards benzoate, 4-aminobenzoate, 3-aminobenzoate, 3-fluorobenzoate, 4-fluorobenzoate, 3-chlorobenzoate, and 4-chlorobenzoate. There is no activity with 3,4-dihydroxybenzoate, 2,3-dihydroxybenzoate, and 2-hydroxybenzoate as substrates. The protein is 3-hydroxybenzoate--CoA/4-hydroxybenzoate--CoA ligase (hcl) of Thauera aromatica.